The primary structure comprises 343 residues: Heme A synthase (343 aa).

8 consecutive transmembrane segments (helical) span residues 13-33, 96-116, 130-150, 165-185, 197-217, 258-278, 290-310, and 311-331; these read VALWLFVVAVLVFAMVVVGGA, HRLLGRLVGVVFAIPFVFFLI, VLLGLGGLQGVVGWWMVSSGL, LGLALALFVFVIWTALDAWAG, GWALAFLGAVFFQSLLGALVA, LHHRLMAYALFVAAIVAGVAA, LTAFVLVGVVCLQAGLGIWTL, and MTAVPLALGVLHQAGAAILLA. H260 contributes to the heme binding site. H322 provides a ligand contact to heme.

Belongs to the COX15/CtaA family. Type 2 subfamily. As to quaternary structure, interacts with CtaB. Heme b is required as a cofactor.

The protein resides in the cell membrane. The catalysed reaction is Fe(II)-heme o + 2 A + H2O = Fe(II)-heme a + 2 AH2. It functions in the pathway porphyrin-containing compound metabolism; heme A biosynthesis; heme A from heme O: step 1/1. Catalyzes the conversion of heme O to heme A by two successive hydroxylations of the methyl group at C8. The first hydroxylation forms heme I, the second hydroxylation results in an unstable dihydroxymethyl group, which spontaneously dehydrates, resulting in the formyl group of heme A. The sequence is that of Heme A synthase from Caulobacter sp. (strain K31).